Consider the following 208-residue polypeptide: FMN-dependent NADH:quinone oxidoreductase (208 aa).

FMN contacts are provided by residues 17 to 19, 99 to 102, and 143 to 146; these read SNS, MWNL, and SRGG.

The protein belongs to the azoreductase type 1 family. In terms of assembly, homodimer. Requires FMN as cofactor.

It carries out the reaction 2 a quinone + NADH + H(+) = 2 a 1,4-benzosemiquinone + NAD(+). The catalysed reaction is N,N-dimethyl-1,4-phenylenediamine + anthranilate + 2 NAD(+) = 2-(4-dimethylaminophenyl)diazenylbenzoate + 2 NADH + 2 H(+). Quinone reductase that provides resistance to thiol-specific stress caused by electrophilic quinones. Its function is as follows. Also exhibits azoreductase activity. Catalyzes the reductive cleavage of the azo bond in aromatic azo compounds to the corresponding amines. In Staphylococcus aureus (strain COL), this protein is FMN-dependent NADH:quinone oxidoreductase.